A 217-amino-acid polypeptide reads, in one-letter code: Pyridoxine/pyridoxamine 5'-phosphate oxidase (217 aa).

Residues 13-16 (RREY) and K71 contribute to the substrate site. FMN contacts are provided by residues 66 to 71 (RIVLLK), 81 to 82 (YT), R87, K88, and Q110. Positions 128, 132, and 136 each coordinate substrate. FMN contacts are provided by residues 145 to 146 (QS) and W190. 196–198 (RLH) contacts substrate. Residue R200 coordinates FMN.

The protein belongs to the pyridoxamine 5'-phosphate oxidase family. In terms of assembly, homodimer. FMN is required as a cofactor.

The catalysed reaction is pyridoxamine 5'-phosphate + O2 + H2O = pyridoxal 5'-phosphate + H2O2 + NH4(+). It carries out the reaction pyridoxine 5'-phosphate + O2 = pyridoxal 5'-phosphate + H2O2. It functions in the pathway cofactor metabolism; pyridoxal 5'-phosphate salvage; pyridoxal 5'-phosphate from pyridoxamine 5'-phosphate: step 1/1. It participates in cofactor metabolism; pyridoxal 5'-phosphate salvage; pyridoxal 5'-phosphate from pyridoxine 5'-phosphate: step 1/1. Catalyzes the oxidation of either pyridoxine 5'-phosphate (PNP) or pyridoxamine 5'-phosphate (PMP) into pyridoxal 5'-phosphate (PLP). This is Pyridoxine/pyridoxamine 5'-phosphate oxidase from Proteus mirabilis (strain HI4320).